The chain runs to 368 residues: MKEPLDLSKYSVRTDLAVEAHQMLQERQEEQQQGIQGVIVKEREEEGIIITKVTIDEVASESMGKKPGNYLTLEVQGIRQQDTELQQKVERIFAKEFSYFLEEVGVTKEASCLIVGLGNWNVTPDALGPIVVENVLVTRHLFQLQPESVEEGFRPVSAIRPGVMGITGIETSDVIYGIIEKTKPDFVIAIDALAARSIERVNSTIQISDTGIHPGSGVGNKRKELSKETLGIPVIAIGVPTVVDAVSITSDTIDFILKHFGREMKEGNKPSRSLLPAGFTFGEKKKLTEEDMPDEKSRNMFLGAVGTLEDEEKRKLIYEVLSPLGHNLMVTPKEVDAFIEDMANVIASGLNAALHHQIDQDNTGAYTH.

Residues 1 to 15 (MKEPLDLSKYSVRTD) constitute a propeptide that is removed on maturation.

The protein belongs to the peptidase A25 family. As to quaternary structure, homotetramer. In terms of processing, autoproteolytically processed. The inactive tetrameric zymogen termed p46 autoprocesses to a smaller form termed p41, which is active only during spore germination.

The catalysed reaction is Endopeptidase action with P4 Glu or Asp, P1 preferably Glu &gt; Asp, P1' hydrophobic and P2' Ala.. Initiates the rapid degradation of small, acid-soluble proteins during spore germination. The chain is Germination protease from Bacillus anthracis (strain A0248).